The chain runs to 341 residues: Retinol dehydrogenase 10 (341 aa).

Residues Ile3–Ala23 form a helical; Signal-anchor membrane-spanning segment. Leu40–Val64 lines the NADP(+) pocket. Residue Ser197 coordinates substrate. The Proton acceptor role is filled by Tyr210.

The protein belongs to the short-chain dehydrogenases/reductases (SDR) family. Detected in retina, entire eyecups and in liver (at protein level).

The protein localises to the microsome membrane. Its subcellular location is the endoplasmic reticulum membrane. The enzyme catalyses all-trans-retinol + NADP(+) = all-trans-retinal + NADPH + H(+). It functions in the pathway cofactor metabolism; retinol metabolism. In terms of biological role, retinol dehydrogenase with a clear preference for NADP. Converts all-trans-retinol to all-trans-retinal. The polypeptide is Retinol dehydrogenase 10 (Rdh10) (Rattus norvegicus (Rat)).